The primary structure comprises 114 residues: Large ribosomal subunit protein uL24 (114 aa).

It belongs to the universal ribosomal protein uL24 family. Part of the 50S ribosomal subunit.

Functionally, one of two assembly initiator proteins, it binds directly to the 5'-end of the 23S rRNA, where it nucleates assembly of the 50S subunit. One of the proteins that surrounds the polypeptide exit tunnel on the outside of the subunit. The protein is Large ribosomal subunit protein uL24 of Thermomicrobium roseum (strain ATCC 27502 / DSM 5159 / P-2).